Here is a 423-residue protein sequence, read N- to C-terminus: Zinc transporter ZIP13 (423 aa).

The Lumenal segment spans residues 1-15 (MPGCPCPGIGMAGQR). The helical transmembrane segment at 16-36 (LLFLAALALELLGGAGGSQQA) threads the bilayer. Residues 37 to 68 (LRSRGVAAACRLDSKESESWGALLSGERLETW) lie on the Cytoplasmic side of the membrane. Residues 69–89 (ICSLLGSLMVGLSGVFPLLVI) form a helical membrane-spanning segment. Over 90–108 (PLEMGTTLRSEAGARRLKQ) the chain is Lumenal. A helical transmembrane segment spans residues 109–129 (LLSFALGGLLGNVFLHLLPEA). The Cytoplasmic portion of the chain corresponds to 130 to 149 (WAYTNSASSGGERQSLQQQQ). A helical membrane pass occupies residues 150 to 170 (QLGLWVIAGFLTFLVLEKLFF). Residues 171–235 (DSKGKEETSQ…TIDNFTHGLA (65 aa)) are Lumenal-facing. A helical membrane pass occupies residues 236–256 (VAASFLVSKKIGLLTTMAILL). Residues 257-262 (HEIPHE) carry the XEXPHE-motif motif. Residues 257-278 (HEIPHEVGDFAILLRAGFDRWS) are Cytoplasmic-facing. The chain crosses the membrane as a helical span at residues 279–299 (AAKLQLSTALGGLLGACFAIC). Residues 300–368 (AQSPKGVGTG…RAPPPATEET (69 aa)) lie on the Lumenal side of the membrane. A helical transmembrane segment spans residues 369–389 (VAWILPFTSGGFLYIALVNVL). Topologically, residues 390 to 401 (PDLLEEDDPWRS) are cytoplasmic. Residues 402–422 (LQQVLLLCAGIVVMVLFSVFV) form a helical membrane-spanning segment. Residue E423 is a topological domain, lumenal.

It belongs to the ZIP transporter (TC 2.A.5) family. Homodimer.

The protein resides in the golgi apparatus membrane. It localises to the cytoplasmic vesicle membrane. The protein localises to the endoplasmic reticulum membrane. It catalyses the reaction Zn(2+)(in) = Zn(2+)(out). Functions as a zinc transporter transporting Zn(2+) from the Golgi apparatus to the cytosol and thus influences the zinc level at least in areas of the cytosol. May regulate beige adipocyte differentiation. This is Zinc transporter ZIP13 from Bos taurus (Bovine).